The chain runs to 806 residues: Centrosomal protein of 85 kDa-like (806 aa).

Disordered stretches follow at residues Met-1–Asp-27, Asn-51–Lys-89, and His-101–Asp-146. Ser-15 bears the Phosphoserine mark. Over residues Thr-60–Asp-74 the composition is skewed to polar residues. Residues Asp-135–Asp-146 show a composition bias toward basic and acidic residues. The residue at position 207 (Ser-207) is a Phosphoserine. The segment at Pro-308 to Pro-353 is disordered. Positions Pro-322–Ser-351 are enriched in polar residues. Residues Gln-442–Lys-644 are a coiled coil.

This sequence belongs to the CEP85 family.

The protein resides in the cytoplasm. The protein localises to the cytoskeleton. It localises to the microtubule organizing center. Its subcellular location is the centrosome. Functionally, plays an essential role in neuronal cell migration. This chain is Centrosomal protein of 85 kDa-like, found in Mus musculus (Mouse).